The chain runs to 261 residues: Cytochrome c oxidase subunit 3 (261 aa).

At Met-1–Pro-15 the chain is on the mitochondrial matrix side. A helical transmembrane segment spans residues Trp-16 to Trp-34. The Mitochondrial intermembrane portion of the chain corresponds to Phe-35–Thr-40. A helical transmembrane segment spans residues Thr-41–Thr-66. Residues Phe-67–Thr-72 lie on the Mitochondrial matrix side of the membrane. The helical transmembrane segment at Pro-73–Ser-105 threads the bilayer. Over Leu-106–Glu-128 the chain is Mitochondrial intermembrane. A helical membrane pass occupies residues Val-129–Met-152. Residues Glu-153–Glu-155 are Mitochondrial matrix-facing. Residues Arg-156–Glu-183 traverse the membrane as a helical segment. The Mitochondrial intermembrane segment spans residues Ala-184–Asp-190. A helical transmembrane segment spans residues Gly-191–Ile-223. Residues Gln-224–His-232 are Mitochondrial matrix-facing. A helical membrane pass occupies residues Phe-233–Ile-256. At Tyr-257–Ser-261 the chain is on the mitochondrial intermembrane side.

Belongs to the cytochrome c oxidase subunit 3 family. Component of the cytochrome c oxidase (complex IV, CIV), a multisubunit enzyme composed of 14 subunits. The complex is composed of a catalytic core of 3 subunits MT-CO1, MT-CO2 and MT-CO3, encoded in the mitochondrial DNA, and 11 supernumerary subunits COX4I, COX5A, COX5B, COX6A, COX6B, COX6C, COX7A, COX7B, COX7C, COX8 and NDUFA4, which are encoded in the nuclear genome. The complex exists as a monomer or a dimer and forms supercomplexes (SCs) in the inner mitochondrial membrane with NADH-ubiquinone oxidoreductase (complex I, CI) and ubiquinol-cytochrome c oxidoreductase (cytochrome b-c1 complex, complex III, CIII), resulting in different assemblies (supercomplex SCI(1)III(2)IV(1) and megacomplex MCI(2)III(2)IV(2)).

It is found in the mitochondrion inner membrane. The enzyme catalyses 4 Fe(II)-[cytochrome c] + O2 + 8 H(+)(in) = 4 Fe(III)-[cytochrome c] + 2 H2O + 4 H(+)(out). Its function is as follows. Component of the cytochrome c oxidase, the last enzyme in the mitochondrial electron transport chain which drives oxidative phosphorylation. The respiratory chain contains 3 multisubunit complexes succinate dehydrogenase (complex II, CII), ubiquinol-cytochrome c oxidoreductase (cytochrome b-c1 complex, complex III, CIII) and cytochrome c oxidase (complex IV, CIV), that cooperate to transfer electrons derived from NADH and succinate to molecular oxygen, creating an electrochemical gradient over the inner membrane that drives transmembrane transport and the ATP synthase. Cytochrome c oxidase is the component of the respiratory chain that catalyzes the reduction of oxygen to water. Electrons originating from reduced cytochrome c in the intermembrane space (IMS) are transferred via the dinuclear copper A center (CU(A)) of subunit 2 and heme A of subunit 1 to the active site in subunit 1, a binuclear center (BNC) formed by heme A3 and copper B (CU(B)). The BNC reduces molecular oxygen to 2 water molecules using 4 electrons from cytochrome c in the IMS and 4 protons from the mitochondrial matrix. The protein is Cytochrome c oxidase subunit 3 (mt-co3) of Cyprinus carpio (Common carp).